The primary structure comprises 329 residues: Replication factor C small subunit 1 (329 aa).

44–51 is an ATP binding site; sequence GPPGTGKT.

It belongs to the activator 1 small subunits family. RfcS subfamily. Heteromultimer composed of small subunits (RfcS) and large subunits (RfcL).

Functionally, part of the RFC clamp loader complex which loads the PCNA sliding clamp onto DNA. The chain is Replication factor C small subunit 1 from Pyrobaculum aerophilum (strain ATCC 51768 / DSM 7523 / JCM 9630 / CIP 104966 / NBRC 100827 / IM2).